The sequence spans 149 residues: Nucleoside diphosphate kinase (149 aa).

The ATP site is built by lysine 9, phenylalanine 57, arginine 85, threonine 91, arginine 102, and asparagine 112. The active-site Pros-phosphohistidine intermediate is the histidine 115.

The protein belongs to the NDK family. In terms of assembly, homotetramer. It depends on Mg(2+) as a cofactor.

The protein localises to the cytoplasm. It carries out the reaction a 2'-deoxyribonucleoside 5'-diphosphate + ATP = a 2'-deoxyribonucleoside 5'-triphosphate + ADP. It catalyses the reaction a ribonucleoside 5'-diphosphate + ATP = a ribonucleoside 5'-triphosphate + ADP. Major role in the synthesis of nucleoside triphosphates other than ATP. The ATP gamma phosphate is transferred to the NDP beta phosphate via a ping-pong mechanism, using a phosphorylated active-site intermediate. The chain is Nucleoside diphosphate kinase from Roseiflexus sp. (strain RS-1).